Here is a 323-residue protein sequence, read N- to C-terminus: NADH-ubiquinone oxidoreductase chain 1 (323 aa).

8 helical membrane-spanning segments follow: residues 9–29, 76–96, 107–127, 145–165, 175–195, 227–247, 258–278, and 298–318; these read ILNP…LTLI, LFVL…PMPM, ILFV…SGWA, ISYE…SGGF, EATW…ISTL, LFFL…AVLF, EFTS…FLWV, and FLPL…ACAG.

This sequence belongs to the complex I subunit 1 family.

The protein localises to the mitochondrion inner membrane. The catalysed reaction is a ubiquinone + NADH + 5 H(+)(in) = a ubiquinol + NAD(+) + 4 H(+)(out). Its function is as follows. Core subunit of the mitochondrial membrane respiratory chain NADH dehydrogenase (Complex I) that is believed to belong to the minimal assembly required for catalysis. Complex I functions in the transfer of electrons from NADH to the respiratory chain. The immediate electron acceptor for the enzyme is believed to be ubiquinone. This is NADH-ubiquinone oxidoreductase chain 1 (MT-ND1) from Gadus morhua (Atlantic cod).